Consider the following 354-residue polypeptide: MLKNDRLLRALNRQPVDRTPVWLMRQAGRYLPEYRATRARAGSFLSMAKNPDIACEVTLQPLQRFPLDAAILFSDILTIPDAMGLELYFVEGEGPKFRHPVRDAAAIHRLGVPDMETELRYVMDAVRVIRRELDGSVPLIGFSGSPWTLACYMIEGGGSKEYARIKAMAFNAPEVLHHLLGTVTDAVIAYLAAQRAAGAQALQVFDTWGGVLSPAMYHEFSLPYLTRIAHELERGEGAERTPLVLFGKGNGAYVADLAASGAEAVGVDWTISLADAAQRAGGRVALQGNLDPATLYGSPEAIRTEVGKTLDSYAQGNGGSREGHVLNLGHGMSPDMNPEHVGVLVEAVQRLSKR.

Residues 25 to 29 (RQAGR), D75, Y152, T207, and H330 contribute to the substrate site.

This sequence belongs to the uroporphyrinogen decarboxylase family. In terms of assembly, homodimer.

The protein localises to the cytoplasm. It catalyses the reaction uroporphyrinogen III + 4 H(+) = coproporphyrinogen III + 4 CO2. It participates in porphyrin-containing compound metabolism; protoporphyrin-IX biosynthesis; coproporphyrinogen-III from 5-aminolevulinate: step 4/4. Catalyzes the decarboxylation of four acetate groups of uroporphyrinogen-III to yield coproporphyrinogen-III. In Xanthomonas oryzae pv. oryzae (strain PXO99A), this protein is Uroporphyrinogen decarboxylase.